Reading from the N-terminus, the 80-residue chain is MAINGRLLCLCLVLGLVFESLGHPSVQEKRAAEDSKPSGERRQTLTTKHEVDCGGIPCQFGCCENDKCRELDCEHYPGIP.

An N-terminal signal peptide occupies residues 1-21; it reads MAINGRLLCLCLVLGLVFESL. A propeptide spanning residues 22 to 42 is cleaved from the precursor; sequence GHPSVQEKRAAEDSKPSGERR.

The protein belongs to the teretoxin M (TM) superfamily. Contains 3 disulfide bonds. Expressed by the venom duct.

It localises to the secreted. In Terebra subulata (Chocolate spotted auger), this protein is Teretoxin Tsu6.5.